A 317-amino-acid polypeptide reads, in one-letter code: Transaldolase (317 aa).

The active-site Schiff-base intermediate with substrate is K132.

It belongs to the transaldolase family. Type 1 subfamily. Homodimer.

It is found in the cytoplasm. The enzyme catalyses D-sedoheptulose 7-phosphate + D-glyceraldehyde 3-phosphate = D-erythrose 4-phosphate + beta-D-fructose 6-phosphate. It functions in the pathway carbohydrate degradation; pentose phosphate pathway; D-glyceraldehyde 3-phosphate and beta-D-fructose 6-phosphate from D-ribose 5-phosphate and D-xylulose 5-phosphate (non-oxidative stage): step 2/3. Functionally, transaldolase is important for the balance of metabolites in the pentose-phosphate pathway. This chain is Transaldolase, found in Shewanella denitrificans (strain OS217 / ATCC BAA-1090 / DSM 15013).